The sequence spans 581 residues: Serine/threonine-protein kinase PINK1, mitochondrial (581 aa).

The transit peptide at 1–77 (MAVRQALGRG…RFFRQSVAGL (77 aa)) directs the protein to the mitochondrion. The Mitochondrial intermembrane portion of the chain corresponds to 78–93 (AARLQRQFVVRAWGCA). Residues 94-110 (GPCGRAVFLAFGLGLGL) form a helical membrane-spanning segment. The segment at 111-117 (IEEKQAE) is required for outer membrane localization. At 111–581 (IEEKQAESRR…LLLCSWRAAL (471 aa)) the chain is on the cytoplasmic side. The Protein kinase domain occupies 156 to 511 (YLIGQSIGKG…VAANVLHLSL (356 aa)). Residues 162–170 (IGKGCSAAV) and lysine 186 each bind ATP. The disordered stretch occupies residues 189–208 (GLLPGRGPGTSAPGEGQERA). Serine 228 is subject to Phosphoserine; by autocatalysis. Residue aspartate 362 is the Proton acceptor of the active site. Serine 402 is subject to Phosphoserine; by autocatalysis.

The protein belongs to the protein kinase superfamily. Ser/Thr protein kinase family. As to quaternary structure, upon mitochondrial depolarization, it forms a supercomplex with TOM and TIM23 complexes. PINK1-TOM-TIM23 supercomplex formation requires PINK1 interaction with TOMM20 and TOMM70 and is critical for PINK1 stabilization at the outer mitochondrial membrane, kinase activation and downstream mitophagy. Upon mitochondrial depolarization, interacts with TIMM23; the interaction is required for PINK1 accumulation at the outer mitochondrial membrane, kinase activation by autophosphorylation and PRKN recruitement to mitochondria. Interacts with PRKN. Interacts with FBXO7. Forms a complex with PRKN and PARK7. Interacts with NENF. Mg(2+) is required as a cofactor. Proteolytically cleaved. In healthy cells, the precursor is continuously imported into the inner mitochondrial membrane (IMM), where it is proteolytically cleaved by mitochondrial-processing peptidase (MPP) and then undergoes further proteolytic cleavage by PARL or AFG3L2 to give rise to the 52 kDa short form. The 52 kDa short form is then released into the cytosol where it rapidly undergoes proteasome-dependent degradation. In unhealthy cells, when cellular stress conditions lead to the loss of mitochondrial membrane potential, mitochondrial import is impaired leading to the precursor accumulating on the outer mitochondrial membrane (OMM). If accumulation at the OMM fails and it is imported into the depolarized mitochondria, it undergoes cleavage by the IMM protease OMA1, promoting its subsequent degradation by the proteasome. In terms of processing, autophosphorylated. Loss of mitochondrial membrane potential results in the precursor accumulating on the outer mitochondrial membrane (OMM) where it is activated by autophosphorylation. Autophosphorylation at Ser-228 and Ser-402 is sufficient and essential for selective recruitment of PRKN to depolarized mitochondria, via PINK1-dependent phosphorylation of ubiquitin and maybe PRKN. In terms of tissue distribution, highly expressed in heart, skeletal muscle and testis, and at lower levels in brain, placenta, liver, kidney, pancreas, prostate, ovary and small intestine. Present in the embryonic testis from an early stage of development.

Its subcellular location is the mitochondrion outer membrane. It localises to the mitochondrion inner membrane. The protein resides in the cytoplasm. The protein localises to the cytosol. The catalysed reaction is L-seryl-[protein] + ATP = O-phospho-L-seryl-[protein] + ADP + H(+). It carries out the reaction L-threonyl-[protein] + ATP = O-phospho-L-threonyl-[protein] + ADP + H(+). Functionally, serine/threonine-protein kinase which acts as a sensor of mitochondrial damage and protects against mitochondrial dysfunction during cellular stress. It phosphorylates mitochondrial proteins to coordinate mitochondrial quality control mechanisms that remove and replace dysfunctional mitochondrial components. Depending on the severity of mitochondrial damage, activity ranges from preventing apoptosis and stimulating mitochondrial biogenesis to eliminating severely damaged mitochondria via PINK1-PRKN-dependent mitophagy. When cellular stress results in irreversible mitochondrial damage, PINK1 accumulates at the outer mitochondrial membrane (OMM) where it phosphorylates pre-existing polyubiquitin chains at 'Ser-65', recruits PRKN from the cytosol to the OMM and activates PRKN by phosphorylation at 'Ser-65'; activated PRKN then ubiquinates VDAC1 and other OMM proteins to initiate mitophagy. The PINK1-PRKN pathway also promotes fission of damaged mitochondria through phosphorylation and PRKN-dependent degradation of mitochondrial proteins involved in fission such as MFN2. This prevents the refusion of unhealthy mitochondria with the mitochondrial network or initiates mitochondrial fragmentation facilitating their later engulfment by autophagosomes. Also promotes mitochondrial fission independently of PRKN and ATG7-mediated mitophagy, via the phosphorylation and activation of DNM1L. Regulates motility of damaged mitochondria by promoting the ubiquitination and subsequent degradation of MIRO1 and MIRO2; in motor neurons, this likely inhibits mitochondrial intracellular anterograde transport along the axons which probably increases the chance of the mitochondria undergoing mitophagy in the soma. Required for ubiquinone reduction by mitochondrial complex I by mediating phosphorylation of complex I subunit NDUFA10. Phosphorylates LETM1, positively regulating its mitochondrial calcium transport activity. The protein is Serine/threonine-protein kinase PINK1, mitochondrial (PINK1) of Homo sapiens (Human).